Consider the following 523-residue polypeptide: Sorting nexin-2 (523 aa).

A disordered region spans residues 1 to 104 (MAAEREPPPL…EPSPAVTPVT (104 aa)). 2 stretches are compositionally biased toward low complexity: residues 27–50 (LFTS…LPAE) and 93–104 (SSEPSPAVTPVT). The residue at position 97 (serine 97) is a Phosphoserine. A phosphothreonine mark is found at threonine 101 and threonine 104. 2 positions are modified to phosphoserine: serine 117 and serine 119. A PX domain is found at 140 to 269 (FDIEIGVSDP…QFLESSELPR (130 aa)). 4 residues coordinate a 1,2-diacyl-sn-glycero-3-phospho-(1D-myo-inositol-3-phosphate): arginine 183, serine 185, lysine 211, and arginine 235. At serine 185 the chain carries Phosphoserine. The interaction with RhoG stretch occupies residues 260–523 (QFLESSELPR…AFLPEAKAIA (264 aa)). Serine 277 carries the phosphoserine modification. A membrane-binding amphipathic helix region spans residues 278–295 (GAGILRMVNKAADAVNKM). The 225-residue stretch at 299-523 (MNESDAWFEE…AFLPEAKAIA (225 aa)) folds into the BAR domain. Lysine 473 carries the N6-acetyllysine modification.

This sequence belongs to the sorting nexin family. In terms of assembly, predominantly forms heterodimers with BAR domain-containing sorting nexins SNX5, SNX6 and SNX32; can self-associate to form homodimers. The heterodimers are proposed to self-assemble into helical arrays on the membrane to stabilize and expand local membrane curvature underlying endosomal tubule formation. Thought to be a component of the originally described retromer complex (also called SNX-BAR retromer) which is a pentamer containing the heterotrimeric retromer cargo-selective complex (CSC), also described as vacuolar protein sorting subcomplex (VPS), and a heterodimeric membrane-deforming subcomplex formed between SNX1 or SNX2 and SNX5 or SNX6 (also called SNX-BAR subcomplex); the respective CSC and SNX-BAR subcomplexes associate with low affinity. Interacts with SNX5, SNX6, SNX32, VPS26A, VPS29, VPS35, FNBP1, KALRN, RHOG (GDP-bound form).

It is found in the early endosome membrane. The protein resides in the cell projection. It localises to the lamellipodium. Functionally, involved in several stages of intracellular trafficking. Interacts with membranes containing phosphatidylinositol 3-phosphate (PtdIns(3P)) or phosphatidylinositol 3,5-bisphosphate (PtdIns(3,5)P2). Acts in part as component of the retromer membrane-deforming SNX-BAR subcomplex. The SNX-BAR retromer mediates retrograde transport of cargo proteins from endosomes to the trans-Golgi network (TGN) and is involved in endosome-to-plasma membrane transport for cargo protein recycling. The SNX-BAR subcomplex functions to deform the donor membrane into a tubular profile called endosome-to-TGN transport carrier (ETC). Can sense membrane curvature and has in vitro vesicle-to-membrane remodeling activity. Required for retrograde endosome-to-TGN transport of TGN38. Promotes KALRN- and RHOG-dependent but retromer-independent membrane remodeling such as lamellipodium formation; the function is dependent on GEF activity of KALRN. The chain is Sorting nexin-2 (SNX2) from Macaca fascicularis (Crab-eating macaque).